Reading from the N-terminus, the 407-residue chain is MKSILWHNLKLCAHGDPNDTIADAAIAVNGDGTIAWTGRASDVPAGYVHWPREDLRGAWVTPGLVDCHTHLVYGGQRADEFAQRLAGASYEEIAQRGGGIVSTVRATRDASEAALFEQACARLRPLLAEGVTAIEIKSGYGLELASERRMLRVARQLGERFPVSVYTTFLGAHALPPEYAGRADEYIDEVCERMLPALADEGLVDAVDVFCERIGFTLAQSERVFEAAARRGLPVKMHAEQLSNGGGSALAARYRALSADHLEYLDAAGVAAMRASGTTAVLLPGAYYFIRETKLPPIDLLRRHGVPIALATDHNPGTSPLTSLLLTMNMGCTVFKLTVQEALLGVTRHAAAALGASDRHGSLAPGRQADFAVWSVSTLAELAYWFGRPLCERVVKGGVTVFTRDAR.

Residues H68 and H70 each contribute to the Fe(3+) site. H68 and H70 together coordinate Zn(2+). 4-imidazolone-5-propanoate is bound by residues R77, Y140, and H173. Position 140 (Y140) interacts with N-formimidoyl-L-glutamate. Residue H238 participates in Fe(3+) binding. Position 238 (H238) interacts with Zn(2+). Position 241 (Q241) interacts with 4-imidazolone-5-propanoate. D313 contacts Fe(3+). D313 is a Zn(2+) binding site. N-formimidoyl-L-glutamate-binding residues include N315 and G317. T318 is a binding site for 4-imidazolone-5-propanoate.

This sequence belongs to the metallo-dependent hydrolases superfamily. HutI family. Requires Zn(2+) as cofactor. Fe(3+) serves as cofactor.

The protein localises to the cytoplasm. The catalysed reaction is 4-imidazolone-5-propanoate + H2O = N-formimidoyl-L-glutamate. The protein operates within amino-acid degradation; L-histidine degradation into L-glutamate; N-formimidoyl-L-glutamate from L-histidine: step 3/3. Catalyzes the hydrolytic cleavage of the carbon-nitrogen bond in imidazolone-5-propanoate to yield N-formimidoyl-L-glutamate. It is the third step in the universal histidine degradation pathway. In Burkholderia mallei (strain ATCC 23344), this protein is Imidazolonepropionase.